A 379-amino-acid chain; its full sequence is S-adenosylmethionine:tRNA ribosyltransferase-isomerase (379 aa).

The segment at 35 to 58 is disordered; it reads AESRPHAESVPHAESRPHAESAFS.

The protein belongs to the QueA family. Monomer.

It localises to the cytoplasm. The enzyme catalyses 7-aminomethyl-7-carbaguanosine(34) in tRNA + S-adenosyl-L-methionine = epoxyqueuosine(34) in tRNA + adenine + L-methionine + 2 H(+). It functions in the pathway tRNA modification; tRNA-queuosine biosynthesis. Its function is as follows. Transfers and isomerizes the ribose moiety from AdoMet to the 7-aminomethyl group of 7-deazaguanine (preQ1-tRNA) to give epoxyqueuosine (oQ-tRNA). The sequence is that of S-adenosylmethionine:tRNA ribosyltransferase-isomerase from Rhizobium leguminosarum bv. trifolii (strain WSM2304).